Here is a 240-residue protein sequence, read N- to C-terminus: Putative N-acetylmannosamine-6-phosphate 2-epimerase (240 aa).

Belongs to the NanE family.

It catalyses the reaction an N-acyl-D-glucosamine 6-phosphate = an N-acyl-D-mannosamine 6-phosphate. It functions in the pathway amino-sugar metabolism; N-acetylneuraminate degradation; D-fructose 6-phosphate from N-acetylneuraminate: step 3/5. Functionally, converts N-acetylmannosamine-6-phosphate (ManNAc-6-P) to N-acetylglucosamine-6-phosphate (GlcNAc-6-P). The protein is Putative N-acetylmannosamine-6-phosphate 2-epimerase of Vibrio cholerae serotype O1 (strain ATCC 39315 / El Tor Inaba N16961).